Consider the following 95-residue polypeptide: Embryonic abundant protein 1 (95 aa).

A compositionally biased stretch (polar residues) spans 1-10 (MASGQQQQGR). A disordered region spans residues 1-95 (MASGQQQQGR…IDESKYKTKS (95 aa)). Composition is skewed to basic and acidic residues over residues 40–64 (AEGRSRGGQTRKEQMGEEGYREMGR) and 75–95 (GGERAAREGIDIDESKYKTKS).

This sequence belongs to the small hydrophilic plant seed protein family. Expressed in dry seeds and immature embryos.

Em protein may act as a cytoplasm protectant during desiccation. This is Embryonic abundant protein 1 (EMP1) from Oryza sativa subsp. japonica (Rice).